The primary structure comprises 247 residues: 2,3-bisphosphoglycerate-dependent phosphoglycerate mutase (247 aa).

Substrate contacts are provided by residues 8-15, 21-22, arginine 60, 87-90, lysine 98, 114-115, and 183-184; these read RHGESTWN, TG, ERHY, RR, and GN. Histidine 9 (tele-phosphohistidine intermediate) is an active-site residue. Glutamate 87 acts as the Proton donor/acceptor in catalysis.

Belongs to the phosphoglycerate mutase family. BPG-dependent PGAM subfamily. As to quaternary structure, homodimer.

It carries out the reaction (2R)-2-phosphoglycerate = (2R)-3-phosphoglycerate. It functions in the pathway carbohydrate degradation; glycolysis; pyruvate from D-glyceraldehyde 3-phosphate: step 3/5. Its function is as follows. Catalyzes the interconversion of 2-phosphoglycerate and 3-phosphoglycerate. The protein is 2,3-bisphosphoglycerate-dependent phosphoglycerate mutase of Paracidovorax citrulli (strain AAC00-1) (Acidovorax citrulli).